The following is a 101-amino-acid chain: Urease subunit beta (101 aa).

The protein belongs to the urease beta subunit family. In terms of assembly, heterotrimer of UreA (gamma), UreB (beta) and UreC (alpha) subunits. Three heterotrimers associate to form the active enzyme.

The protein localises to the cytoplasm. The enzyme catalyses urea + 2 H2O + H(+) = hydrogencarbonate + 2 NH4(+). It participates in nitrogen metabolism; urea degradation; CO(2) and NH(3) from urea (urease route): step 1/1. This Rhizobium johnstonii (strain DSM 114642 / LMG 32736 / 3841) (Rhizobium leguminosarum bv. viciae) protein is Urease subunit beta.